The following is a 429-amino-acid chain: Cytochrome bc1 complex Rieske iron-sulfur subunit (429 aa).

The interval 1 to 45 (MSRADDDAVGVPPTCGGRSDEEERRIVPGPNPQDGAKDGAKATAV) is disordered. The next 3 membrane-spanning stretches (helical) occupy residues 96 to 116 (VAVWLLLGGVFGLALLLIFLF), 137 to 157 (PLYGLTFGLSILSIAIGAVLY), and 207 to 227 (FGVGMGAFGLGTLVAFAGGLI). A Rieske domain is found at 316-410 (RNPVMLIRIK…ITIDTDGYLV (95 aa)). [2Fe-2S] cluster-binding residues include C353, H355, C372, and H375. A disulfide bridge links C358 with C374.

The protein belongs to the Rieske iron-sulfur protein family. As to quaternary structure, the cytochrome bc1 complex is composed of a cytochrome b (QcrB), the Rieske iron-sulfur protein (QcrA) and a diheme cytochrome c (QcrC) subunit. [2Fe-2S] cluster is required as a cofactor.

The protein localises to the cell membrane. Iron-sulfur subunit of the cytochrome bc1 complex, an essential component of the respiratory electron transport chain required for ATP synthesis. The bc1 complex catalyzes the oxidation of menaquinol and the reduction of cytochrome c in the respiratory chain. The bc1 complex operates through a Q-cycle mechanism that couples electron transfer to generation of the proton gradient that drives ATP synthesis. This is Cytochrome bc1 complex Rieske iron-sulfur subunit (qcrA) from Mycobacterium bovis (strain ATCC BAA-935 / AF2122/97).